A 549-amino-acid polypeptide reads, in one-letter code: Glucose-6-phosphate isomerase (549 aa).

The active-site Proton donor is E355. Active-site residues include H386 and K514.

It belongs to the GPI family.

Its subcellular location is the cytoplasm. The enzyme catalyses alpha-D-glucose 6-phosphate = beta-D-fructose 6-phosphate. It functions in the pathway carbohydrate biosynthesis; gluconeogenesis. The protein operates within carbohydrate degradation; glycolysis; D-glyceraldehyde 3-phosphate and glycerone phosphate from D-glucose: step 2/4. In terms of biological role, catalyzes the reversible isomerization of glucose-6-phosphate to fructose-6-phosphate. The chain is Glucose-6-phosphate isomerase from Salmonella gallinarum (strain 287/91 / NCTC 13346).